The sequence spans 583 residues: MNAENLDPATQAQTIWSDTLALIKQNSRLTAREQGWLAGVTAEAVVGTTIILDVENAQTLQVLQTELNEPIIGALEIANGGSPMFPAFKVMPPAQPEPQTTASPEDSGSRAADAQGAAKESVQPDEDSRTPRHSAEQTGDSRPAAAQEREDSAVHMARPDEQTAESHREPEHEPAQQPVTSHYDEAIVQTFEDIDPVAGFGPSVAGTTAPQYPPQSEMQGSFTPGVTGNYRDPVTHLNSNDTFDTFIQGDSNRFARTVALAVAEGSGRDYNPLCIYGGSGLGKTHLLHAIGNYAVQNQKPRPRVLYVTSEEFTNDFIESIRTSGQDNEDPAMEKFYRKYREVDVLLIDDIQFLGGKRGILEQFFHTFNSLYQANKRIVIASDVPPHNLEDFEDRLISRFEQGITVDVKPPNLETRIAILRMLAEQNHIRVPNDVLNLIAERFANNVRELEGALKRVIAMASLNHQPVTRALTERTLQDFFTTDVEVKPTDIIARVAKYFHLTFDDIVGPGRPRSVTLARQIAMYLTRDMTSMSLMNIGQIFGGRDHTTVMHACKHIADKMQEKQEIYNYVNELTVELKQHLND.

The segment at 1 to 91 (MNAENLDPAT…SPMFPAFKVM (91 aa)) is domain I, interacts with DnaA modulators. Disordered stretches follow at residues 86-179 (PAFK…QQPV) and 197-232 (VAGF…NYRD). The interval 91-235 (MPPAQPEPQT…VTGNYRDPVT (145 aa)) is domain II. The segment covering 97–106 (EPQTTASPED) has biased composition (polar residues). Basic and acidic residues-rich tracts occupy residues 126–135 (EDSRTPRHSA) and 147–174 (QERE…EHEP). Positions 205–226 (AGTTAPQYPPQSEMQGSFTPGV) are enriched in polar residues. Residues 236–460 (HLNSNDTFDT…GALKRVIAMA (225 aa)) form a domain III, AAA+ region region. ATP-binding residues include glycine 280, glycine 282, lysine 283, and threonine 284. Residues 461-583 (SLNHQPVTRA…TVELKQHLND (123 aa)) are domain IV, binds dsDNA.

It belongs to the DnaA family. Oligomerizes as a right-handed, spiral filament on DNA at oriC.

It is found in the cytoplasm. Its function is as follows. Plays an essential role in the initiation and regulation of chromosomal replication. ATP-DnaA binds to the origin of replication (oriC) to initiate formation of the DNA replication initiation complex once per cell cycle. Binds the DnaA box (a 9 base pair repeat at the origin) and separates the double-stranded (ds)DNA. Forms a right-handed helical filament on oriC DNA; dsDNA binds to the exterior of the filament while single-stranded (ss)DNA is stabiized in the filament's interior. The ATP-DnaA-oriC complex binds and stabilizes one strand of the AT-rich DNA unwinding element (DUE), permitting loading of DNA polymerase. After initiation quickly degrades to an ADP-DnaA complex that is not apt for DNA replication. Binds acidic phospholipids. This is Chromosomal replication initiator protein DnaA from Bifidobacterium animalis subsp. lactis (strain AD011).